We begin with the raw amino-acid sequence, 159 residues long: Putative RING-H2 finger protein ATL69 (159 aa).

A helical membrane pass occupies residues L13–A33. The segment at C94–R136 adopts an RING-type; atypical zinc-finger fold.

This sequence belongs to the RING-type zinc finger family. ATL subfamily.

It localises to the membrane. It carries out the reaction S-ubiquitinyl-[E2 ubiquitin-conjugating enzyme]-L-cysteine + [acceptor protein]-L-lysine = [E2 ubiquitin-conjugating enzyme]-L-cysteine + N(6)-ubiquitinyl-[acceptor protein]-L-lysine.. It functions in the pathway protein modification; protein ubiquitination. The sequence is that of Putative RING-H2 finger protein ATL69 (ATL69) from Arabidopsis thaliana (Mouse-ear cress).